Reading from the N-terminus, the 492-residue chain is Variant surface glycoprotein MITAT 1.1 (492 aa).

The signal sequence occupies residues 1 to 32 (MATGRAKNTKWARWLSTAGLIIVVTLPATTMA). 2 disulfide bridges follow: C47–C177 and C155–C222. 2 N-linked (GlcNAc...) asparagine glycosylation sites follow: N298 and N471. S475 carries GPI-anchor amidated serine lipidation. The propeptide at 476 to 492 (NSFLIHKAPLLLAFLLF) is removed in mature form.

It localises to the cell membrane. Its function is as follows. VSG forms a coat on the surface of the parasite. The trypanosome evades the immune response of the host by expressing a series of antigenically distinct VSGs from an estimated 1000 VSG genes. This Trypanosoma brucei brucei protein is Variant surface glycoprotein MITAT 1.1.